Reading from the N-terminus, the 226-residue chain is Enolase-phosphatase E1 (226 aa).

It belongs to the HAD-like hydrolase superfamily. MasA/MtnC family. Monomer. The cofactor is Mg(2+).

It carries out the reaction 5-methylsulfanyl-2,3-dioxopentyl phosphate + H2O = 1,2-dihydroxy-5-(methylsulfanyl)pent-1-en-3-one + phosphate. It functions in the pathway amino-acid biosynthesis; L-methionine biosynthesis via salvage pathway; L-methionine from S-methyl-5-thio-alpha-D-ribose 1-phosphate: step 3/6. The protein operates within amino-acid biosynthesis; L-methionine biosynthesis via salvage pathway; L-methionine from S-methyl-5-thio-alpha-D-ribose 1-phosphate: step 4/6. Bifunctional enzyme that catalyzes the enolization of 2,3-diketo-5-methylthiopentyl-1-phosphate (DK-MTP-1-P) into the intermediate 2-hydroxy-3-keto-5-methylthiopentenyl-1-phosphate (HK-MTPenyl-1-P), which is then dephosphorylated to form the acireductone 1,2-dihydroxy-3-keto-5-methylthiopentene (DHK-MTPene). The protein is Enolase-phosphatase E1 of Shewanella putrefaciens (strain CN-32 / ATCC BAA-453).